The primary structure comprises 382 residues: Protein delta homolog 2 (382 aa).

Positions 1 to 26 (MPSGCRCLNLVCLLCILGATSQPARA) are cleaved as a signal peptide. 4 consecutive EGF-like domains span residues 27-58 (DDCS…LHCE), 62-89 (RMPG…KFCD), 91-129 (DEHI…RGCE), and 131-172 (KAGP…AHCE). The Extracellular segment spans residues 27 to 305 (DDCSSHCDLA…RQEAGLGESS (279 aa)). Cystine bridges form between cysteine 29-cysteine 40, cysteine 33-cysteine 46, cysteine 48-cysteine 57, cysteine 66-cysteine 71, cysteine 79-cysteine 88, cysteine 95-cysteine 107, cysteine 101-cysteine 117, cysteine 119-cysteine 128, cysteine 135-cysteine 148, cysteine 142-cysteine 160, cysteine 162-cysteine 171, cysteine 178-cysteine 189, cysteine 183-cysteine 198, cysteine 200-cysteine 209, cysteine 216-cysteine 227, cysteine 221-cysteine 236, and cysteine 238-cysteine 247. Residue asparagine 157 is glycosylated (N-linked (GlcNAc...) asparagine). Positions 174 to 210 (NVDDCLMRPCANGATCIDGINRFSCLCPEGFAGRFCT) constitute an EGF-like 5; calcium-binding domain. The EGF-like 6; calcium-binding domain occupies 212-248 (NLDDCASRPCQRGARCRDRVHDFDCLCPSGYGGKTCE). A helical membrane pass occupies residues 306 to 326 (LVALVVFGSLTAALVLATVLL). Over 327–382 (TLRAWRRGICPTGPCCDPAPHYAPARQDQECQVSMLPAGFPLSPDLPPEPGKTTAL) the chain is Cytoplasmic.

Its subcellular location is the membrane. In terms of biological role, regulates adipogenesis. This Rattus norvegicus (Rat) protein is Protein delta homolog 2 (Dlk2).